A 72-amino-acid chain; its full sequence is MSKEDVIEVEGVIKEALPNATFQVELENGHVVLAHLSGKLRMHFIRILPGDKVTVELSPYDLTRGRITWRKK.

Residues 1-72 form the S1-like domain; the sequence is MSKEDVIEVE…TRGRITWRKK (72 aa).

Belongs to the IF-1 family. In terms of assembly, component of the 30S ribosomal translation pre-initiation complex which assembles on the 30S ribosome in the order IF-2 and IF-3, IF-1 and N-formylmethionyl-tRNA(fMet); mRNA recruitment can occur at any time during PIC assembly.

It localises to the cytoplasm. In terms of biological role, one of the essential components for the initiation of protein synthesis. Stabilizes the binding of IF-2 and IF-3 on the 30S subunit to which N-formylmethionyl-tRNA(fMet) subsequently binds. Helps modulate mRNA selection, yielding the 30S pre-initiation complex (PIC). Upon addition of the 50S ribosomal subunit IF-1, IF-2 and IF-3 are released leaving the mature 70S translation initiation complex. This Alkaliphilus metalliredigens (strain QYMF) protein is Translation initiation factor IF-1.